The following is a 459-amino-acid chain: RuvB-like helicase 1 (459 aa).

75 to 82 (GGPSTGKT) contributes to the ATP binding site.

Belongs to the RuvB family. May form heterododecamers with RVB2. Component of the SWR1 chromatin remodeling complex, the INO80 chromatin remodeling complex, and of the R2TP complex.

The protein resides in the nucleus. It carries out the reaction ATP + H2O = ADP + phosphate + H(+). Its function is as follows. DNA helicase which participates in several chromatin remodeling complexes, including the SWR1 and the INO80 complexes. The SWR1 complex mediates the ATP-dependent exchange of histone H2A for the H2A variant HZT1 leading to transcriptional regulation of selected genes by chromatin remodeling. The INO80 complex remodels chromatin by shifting nucleosomes and is involved in DNA repair. Also involved in pre-rRNA processing. The polypeptide is RuvB-like helicase 1 (RVB1) (Eremothecium gossypii (strain ATCC 10895 / CBS 109.51 / FGSC 9923 / NRRL Y-1056) (Yeast)).